The primary structure comprises 414 residues: Voltage-gated ClC-type chloride channel ClcB (414 aa).

11 helical membrane passes run 5-25 (LVIS…FHQA), 54-74 (ALTP…YQRY), 116-136 (SAIG…SVFA), 147-167 (LWVA…PLAG), 169-189 (LFIA…PVVI), 220-240 (VQYF…PLFL), 255-275 (LLPP…SLIF), 292-312 (TPPG…AVLA), 327-347 (LFVG…WPVL), 353-373 (LLMA…APIM), and 381-401 (MTGE…ATTI).

The protein belongs to the chloride channel (TC 2.A.49) family. ClcB subfamily.

It localises to the cell inner membrane. Probably acts as an electrical shunt for an outwardly-directed proton pump that is linked to amino acid decarboxylation, as part of the extreme acid resistance (XAR) response. The polypeptide is Voltage-gated ClC-type chloride channel ClcB (Yersinia pestis).